A 136-amino-acid polypeptide reads, in one-letter code: Small ribosomal subunit protein eS8 (136 aa).

Residues 1 to 23 (MGVYHGNDLKKPTGGKKRPHQKV) are disordered. Residues 13–23 (TGGKKRPHQKV) are compositionally biased toward basic residues.

The protein belongs to the eukaryotic ribosomal protein eS8 family. In terms of assembly, part of the 30S ribosomal subunit.

In Hyperthermus butylicus (strain DSM 5456 / JCM 9403 / PLM1-5), this protein is Small ribosomal subunit protein eS8.